The following is a 110-amino-acid chain: Large ribosomal subunit protein uL22 (110 aa).

Belongs to the universal ribosomal protein uL22 family. Part of the 50S ribosomal subunit.

Its function is as follows. This protein binds specifically to 23S rRNA; its binding is stimulated by other ribosomal proteins, e.g. L4, L17, and L20. It is important during the early stages of 50S assembly. It makes multiple contacts with different domains of the 23S rRNA in the assembled 50S subunit and ribosome. In terms of biological role, the globular domain of the protein is located near the polypeptide exit tunnel on the outside of the subunit, while an extended beta-hairpin is found that lines the wall of the exit tunnel in the center of the 70S ribosome. The polypeptide is Large ribosomal subunit protein uL22 (Haemophilus influenzae (strain 86-028NP)).